Consider the following 179-residue polypeptide: Auxin-induced protein IAA6 (179 aa).

Positions 13 to 17 (LRLGL) match the EAR-like (transcriptional repression) motif. Positions 31–52 (FSEIDGGVEENGGSGDRKSVDK) are disordered. The region spanning 75 to 163 (KMYMKVSMDG…KRLRIMKRSD (89 aa)) is the PB1 domain.

Belongs to the Aux/IAA family. As to quaternary structure, homodimers and heterodimers.

The protein resides in the nucleus. Functionally, aux/IAA proteins are short-lived transcriptional factors that function as repressors of early auxin response genes at low auxin concentrations. Repression is thought to result from the interaction with auxin response factors (ARFs), proteins that bind to the auxin-responsive promoter element (AuxRE). Formation of heterodimers with ARF proteins may alter their ability to modulate early auxin response genes expression. This chain is Auxin-induced protein IAA6 (IAA6), found in Pisum sativum (Garden pea).